The following is a 229-amino-acid chain: Probable methylthioribulose-1-phosphate dehydratase (229 aa).

Cys97 lines the substrate pocket. Zn(2+)-binding residues include His115 and His117. Glu139 (proton donor/acceptor) is an active-site residue. His195 is a Zn(2+) binding site.

It belongs to the aldolase class II family. MtnB subfamily. It depends on Zn(2+) as a cofactor.

It is found in the cytoplasm. It carries out the reaction 5-(methylsulfanyl)-D-ribulose 1-phosphate = 5-methylsulfanyl-2,3-dioxopentyl phosphate + H2O. Its pathway is amino-acid biosynthesis; L-methionine biosynthesis via salvage pathway; L-methionine from S-methyl-5-thio-alpha-D-ribose 1-phosphate: step 2/6. In terms of biological role, catalyzes the dehydration of methylthioribulose-1-phosphate (MTRu-1-P) into 2,3-diketo-5-methylthiopentyl-1-phosphate (DK-MTP-1-P). The chain is Probable methylthioribulose-1-phosphate dehydratase from Acyrthosiphon pisum (Pea aphid).